The following is a 947-amino-acid chain: Protein NETWORKED 2A (947 aa).

Residues 10-90 enclose the NAB domain; it reads YSWWWASHIR…ERYDHLSREL (81 aa). The disordered stretch occupies residues 105-131; that stretch reads VQFPLEDDSDENEDYDGRPRKPPKHLH. A compositionally biased stretch (acidic residues) spans 109–118; the sequence is LEDDSDENED. Coiled-coil stretches lie at residues 348 to 454 and 568 to 619; these read KLAE…IQDV and VLRD…QKLD. 2 stretches are compositionally biased toward basic and acidic residues: residues 618–627 and 635–644; these read LDTTGKDSPH and LEHEQGHHET. Disordered regions lie at residues 618-675, 743-763, and 911-947; these read LDTT…RTKS, RIES…AVAS, and KNRQ…KLPE. Residues 645–660 show a composition bias toward polar residues; that stretch reads VSISPTSNFSVATTPH. Basic and acidic residues predominate over residues 662 to 675; that stretch reads QVGDVKRTPGRTKS. Positions 722 to 809 form a coiled coil; the sequence is VHQIQKYQTT…LANIQEEIAR (88 aa). 2 stretches are compositionally biased toward polar residues: residues 749-761 and 915-927; these read QQES…NTAV and QKQS…SCVS.

The protein belongs to the NET family. As to expression, expressed specifically in pollen.

It is found in the cell membrane. Its function is as follows. Plant-specific actin binding protein. Associates with F-actin at the plasma membrane in growing pollen tubes. May be part of a membrane-cytoskeletal adapter complex. This is Protein NETWORKED 2A from Arabidopsis thaliana (Mouse-ear cress).